A 123-amino-acid chain; its full sequence is Small ribosomal subunit protein uS12 (123 aa).

Position 89 is a 3-methylthioaspartic acid (Asp-89).

Belongs to the universal ribosomal protein uS12 family. As to quaternary structure, part of the 30S ribosomal subunit. Contacts proteins S8 and S17. May interact with IF1 in the 30S initiation complex.

In terms of biological role, with S4 and S5 plays an important role in translational accuracy. Its function is as follows. Interacts with and stabilizes bases of the 16S rRNA that are involved in tRNA selection in the A site and with the mRNA backbone. Located at the interface of the 30S and 50S subunits, it traverses the body of the 30S subunit contacting proteins on the other side and probably holding the rRNA structure together. The combined cluster of proteins S8, S12 and S17 appears to hold together the shoulder and platform of the 30S subunit. This is Small ribosomal subunit protein uS12 from Citrifermentans bemidjiense (strain ATCC BAA-1014 / DSM 16622 / JCM 12645 / Bem) (Geobacter bemidjiensis).